Reading from the N-terminus, the 68-residue chain is Putative transcript Y 10 protein (68 aa).

This is Putative transcript Y 10 protein (TTTY10) from Homo sapiens (Human).